A 221-amino-acid polypeptide reads, in one-letter code: Ribonuclease T (221 aa).

One can recognise an Exonuclease domain in the interval 20-196; sequence VVVDLETGGF…YDTERTAELF (177 aa). D23, E25, H183, and D188 together coordinate Mg(2+). The Proton donor/acceptor role is filled by H183.

This sequence belongs to the RNase T family. In terms of assembly, homodimer. The cofactor is Mg(2+).

Trims short 3' overhangs of a variety of RNA species, leaving a one or two nucleotide 3' overhang. Responsible for the end-turnover of tRNA: specifically removes the terminal AMP residue from uncharged tRNA (tRNA-C-C-A). Also appears to be involved in tRNA biosynthesis. This chain is Ribonuclease T, found in Chromohalobacter salexigens (strain ATCC BAA-138 / DSM 3043 / CIP 106854 / NCIMB 13768 / 1H11).